A 221-amino-acid polypeptide reads, in one-letter code: MKPPMDLDSLLTQTPAKDNAALERVLAAARGELALRRPVRRWRTQAVGLMAASAGLGLLAAVVLLAVGAVTGPLLLARAPLLAMLVGTSAVCAWGALSPKGRWMRRLGVGLAVVSAAALVLARGAPHSPPSFPGWVCTVSHLAIGVVPLVVALFALRGAFFQPLRAVVAGLSVGSTGALLGELACEQDWRHVLSHHLLAWVVITVVLVVISKSLKPRSYAP.

Helical transmembrane passes span 56 to 76 (LGLL…PLLL), 79 to 99 (APLL…ALSP), 107 to 127 (LGVG…GAPH), 136 to 156 (VCTV…LFAL), 166 to 186 (AVVA…LACE), and 191 to 211 (HVLS…VVIS).

It localises to the cell inner membrane. Functionally, negative regulator of the carotenoid synthesis regulon. It is probably inactivated by protoporphyrin IX in the presence of blue light. Inactivation of CarR leads to loss of negative control over the carotenogenesis protein CarQ. This chain is Carotenogenesis protein CarR (carR), found in Myxococcus xanthus.